The chain runs to 71 residues: Small ribosomal subunit protein bS21 (71 aa).

Belongs to the bacterial ribosomal protein bS21 family.

The sequence is that of Small ribosomal subunit protein bS21 from Blochmanniella floridana.